A 211-amino-acid chain; its full sequence is C-type lectin domain family 2 member L (211 aa).

The segment at 1-53 (MEPAREPPARARPPPPAARPAPAAPRPRSPAEAEARGPEGLLRRSGSGYEGST) is disordered. Residues 10-28 (RARPPPPAARPAPAAPRPR) are compositionally biased toward pro residues. Ser29 carries the post-translational modification Phosphoserine. The helical transmembrane segment at 66–86 (LLLGAIAVLLFAILVVMSILA) threads the bilayer. Residues 104–206 (YGRKCYYFSE…CLTTRPWVCS (103 aa)) form the C-type lectin domain. 2 disulfides stabilise this stretch: Cys125–Cys205 and Cys184–Cys197.

It is found in the membrane. The sequence is that of C-type lectin domain family 2 member L (Clec2l) from Mus musculus (Mouse).